The chain runs to 153 residues: MIFSLYLIVAISLADLTAAQQECDCKNRFCFPNVVANWIGAAEYCSRNGWRLAILDTEEKQQQVEEQAQKVDAFKTNKVELWIGASDLAKEGKFVWHGTGIDVSYEKWIAGMPDNRNGNEHCVHLWYEPSRSFQWQWNDVVCSSTRRFVCERM.

A signal peptide spans 1 to 19 (MIFSLYLIVAISLADLTAA). The C-type lectin domain occupies 26-151 (KNRFCFPNVV…CSSTRRFVCE (126 aa)). Disulfide bonds link cysteine 45/cysteine 150 and cysteine 122/cysteine 142.

Requires Ca(2+) as cofactor. In terms of tissue distribution, expressed in female salivary gland. Not detected or low-level expression in female midgut and fat body.

The protein resides in the secreted. Functionally, salivary protein with carbohydrate-binding activity; exibits high affinity for D-mannose. Agglutinates host erythrocytes. Probably participates in mosquito innate immune responses to prevent microorganism multiplication in sugar and blood meals. In terms of biological role, (Microbial infection) Agglutinates Staphylococcus aureus in vitro. (Microbial infection) Agglutinates Candida albicans in vitro. Its function is as follows. (Microbial infection) Does not agglutinate Escherichia coli in vitro. The chain is Salivary C-type lectin 1 from Aedes albopictus (Asian tiger mosquito).